We begin with the raw amino-acid sequence, 62 residues long: Photosystem II reaction center protein Z (62 aa).

The next 2 helical transmembrane spans lie at 8–28 and 41–61; these read AVFALIATSSILLISVPVVFA and FSGTSLWIGLVFLVAILNSLI.

The protein belongs to the PsbZ family. PSII is composed of 1 copy each of membrane proteins PsbA, PsbB, PsbC, PsbD, PsbE, PsbF, PsbH, PsbI, PsbJ, PsbK, PsbL, PsbM, PsbT, PsbY, PsbZ, Psb30/Ycf12, at least 3 peripheral proteins of the oxygen-evolving complex and a large number of cofactors. It forms dimeric complexes.

It localises to the plastid. The protein resides in the chloroplast thylakoid membrane. Functionally, may control the interaction of photosystem II (PSII) cores with the light-harvesting antenna, regulates electron flow through the 2 photosystem reaction centers. PSII is a light-driven water plastoquinone oxidoreductase, using light energy to abstract electrons from H(2)O, generating a proton gradient subsequently used for ATP formation. The protein is Photosystem II reaction center protein Z of Amborella trichopoda.